The chain runs to 203 residues: Chaperonin-like RbcX protein 2, chloroplastic (203 aa).

The N-terminal 78 residues, 1–78 (MVSAWFVVGS…RKSKKLLIVN (78 aa)), are a transit peptide targeting the chloroplast.

This sequence belongs to the RbcX family. Homodimer. Interacts with rbcL, atpB and RBCS-1B.

It localises to the plastid. The protein resides in the chloroplast stroma. Chaperone involved in RuBisCO assembly process. This is Chaperonin-like RbcX protein 2, chloroplastic from Arabidopsis thaliana (Mouse-ear cress).